The primary structure comprises 769 residues: Subtilisin-like protease 3 (769 aa).

Residues N68, N102, N108, N295, N316, and N356 are each glycosylated (N-linked (GlcNAc...) asparagine). A compositionally biased stretch (basic residues) spans 293–302 (KINHSNKHKN). The interval 293–329 (KINHSNKHKNNNNNNNNNDYHNNNKSNYHSHSSAKCQ) is disordered. The segment covering 303–325 (NNNNNNNNDYHNNNKSNYHSHSS) has biased composition (low complexity). Positions 345–756 (GYDIIQMEEG…GGFINVYDLV (412 aa)) constitute a Peptidase S8 domain. The active-site Charge relay system is the D372. The tract at residues 468 to 493 (NIKSSDNIKSSDNINSSDNIKSSDNN) is disordered. N482 and N515 each carry an N-linked (GlcNAc...) asparagine glycan. H523 serves as the catalytic Charge relay system. 2 N-linked (GlcNAc...) asparagine glycosylation sites follow: N584 and N616. S701 functions as the Charge relay system in the catalytic mechanism. The N-linked (GlcNAc...) asparagine glycan is linked to N720.

It belongs to the peptidase S8 family.

It is found in the secreted. It carries out the reaction Hydrolysis of proteins with broad specificity for peptide bonds, and a preference for a large uncharged residue in P1. Hydrolyzes peptide amides.. Functionally, serine protease which may cleave PFN/profilin. This is Subtilisin-like protease 3 from Plasmodium falciparum (isolate 3D7).